Here is a 219-residue protein sequence, read N- to C-terminus: uncharacterized protein (219 aa).

An RRM domain is found at 30 to 107; that stretch reads FRLFVGNLGN…RPVKLSRATS (78 aa). Over residues 140-149 the composition is skewed to basic residues; the sequence is KKIKNKHGKN. The segment at 140-219 is disordered; that stretch reads KKIKNKHGKN…YSRASSFRRV (80 aa). Over residues 150–169 the composition is skewed to low complexity; it reads SSKSSRAAQSAAAELISSSS. Residues 176-186 are compositionally biased toward polar residues; that stretch reads ANSTSVPNAVN.

This is an uncharacterized protein from Schizosaccharomyces pombe (strain 972 / ATCC 24843) (Fission yeast).